A 114-amino-acid chain; its full sequence is UPF0342 protein LCABL_19440 (114 aa).

This sequence belongs to the UPF0342 family.

This Lacticaseibacillus casei (strain BL23) (Lactobacillus casei) protein is UPF0342 protein LCABL_19440.